The following is a 165-amino-acid chain: MSHPALTQLRALRYFKEIPVLDPQLLDWLLLEDSMTKRFEQQGKTVSVTMIREGFVEQNEIPEELPLLPKESRYWLREILLCADGEPWLAGRTVVPVSTLSGPELALQKLGKTPLGRYLFTSSTLTRDFIEIGRDAGLWGRRSRLRLSGKPLLLTELFLPASPLY.

Residues methionine 35, arginine 77, leucine 115, and glutamate 156 each contribute to the substrate site.

It belongs to the UbiC family. In terms of assembly, monomer.

The protein localises to the cytoplasm. The enzyme catalyses chorismate = 4-hydroxybenzoate + pyruvate. Its pathway is cofactor biosynthesis; ubiquinone biosynthesis. In terms of biological role, removes the pyruvyl group from chorismate, with concomitant aromatization of the ring, to provide 4-hydroxybenzoate (4HB) for the ubiquinone pathway. The protein is Chorismate pyruvate-lyase of Escherichia coli O7:K1 (strain IAI39 / ExPEC).